A 78-amino-acid polypeptide reads, in one-letter code: Small ribosomal subunit protein bS21A (78 aa).

Positions 30 to 52 (MKARSAYEKPSEKRAREKGEAVR) are enriched in basic and acidic residues. Residues 30–78 (MKARSAYEKPSEKRAREKGEAVRRQRKLARKKLQREGLLPAPKKAVRAR) are disordered. Positions 53–62 (RQRKLARKKL) are enriched in basic residues.

It belongs to the bacterial ribosomal protein bS21 family.

The protein is Small ribosomal subunit protein bS21A of Rhizobium etli (strain ATCC 51251 / DSM 11541 / JCM 21823 / NBRC 15573 / CFN 42).